The following is a 534-amino-acid chain: Cytochrome P450 monooxygenase ascG (534 aa).

Residues 13-33 (FVASFPALSAAAGLIVAISFI) traverse the membrane as a helical segment. Asparagine 466 is a glycosylation site (N-linked (GlcNAc...) asparagine). Cysteine 469 contributes to the heme binding site.

This sequence belongs to the cytochrome P450 family. It depends on heme as a cofactor.

It is found in the membrane. It catalyses the reaction ilicicolin C + NADPH + O2 + H(+) = ascochlorin + NADP(+) + 2 H2O. It participates in secondary metabolite biosynthesis; terpenoid biosynthesis. In terms of biological role, cytochrome P450 monooxygenase; part of the asc-1 gene cluster that mediates the biosynthesis of both ascochlorin and ascofuranone, a strong inhibitor of cyanide-insensitive alternative oxidases and a promising drug candidate against African trypanosomiasis. The first step in the pathway is performed by the non-reducing polyketide synthase ascC that produces orsellinic acid by condensing acetyl-CoA with 3 malonyl-CoA units. Orsellinic acid is then prenylated by the prenyltransferase ascA to yield ilicicolinic acid B. Ilicicolinic acid B is further reduced to ilicicolin B by the reductase ascB. The halogenase ascD then chlorinates ilicicolin B to produce ilicicolin A which is converted to ilicicolin A epoxide by the cytochrome P450 monooxygenase ascE that catalyzes stereoselective epoxidation of the terminal double bond of the prenyl group. Ilicicolin A epoxide is the last common precursor for the biosynthesis of ascofuranone and ascochlorin. The terpene cyclase ascF produces a monocyclic terpene, and the cyclization reaction is proposed to be initiated by protonation of the terminal epoxide of ilicicolin A epoxide to generate a monocyclic tertiarycation, which is followed by a series of hydride and methyl shifts with abstraction of proton, leading to the formation of the (14S,15R,19R)-trimethylcyclohexanone ring structure of ilicicolin C, which is finally reduced to ascochlorin by the dehydrogenase ascG. On the other hand, ilicicolin A epoxide is hydroxylated by the cytochrome P450 monooxygenase ascH, and the resultant product is cyclized by the terpene cyclase ascI to ascofuranol via protonation-initiated epoxide ring opening, which facilitates the 6-endo-tet cyclization to form the tetrahy-drofuran ring. Finally, ascofuranol is oxidized into ascofuranone by ascJ. This Acremonium egyptiacum (Oospora egyptiaca) protein is Cytochrome P450 monooxygenase ascG.